The following is a 452-amino-acid chain: Diphthine methyltransferase (452 aa).

WD repeat units lie at residues 79–130, 131–185, 186–229, 230–273, 274–313, 314–403, and 404–448; these read PLVE…SHVL, EPLS…RPRL, QKVA…RVPG, KFLF…RNMK, QPLADTPVQGGVWRIKWHPFHHHLLLAACMHSGFKILNCQ, KAME…TEGM, and RKNG…HLWE. Ser-353 carries the phosphoserine modification. The interval 371–402 is disordered; that stretch reads SELPTPCHECREDNDGEGHARPQSGMKPLTEG. A compositionally biased stretch (basic and acidic residues) spans 378–390; the sequence is HECREDNDGEGHA.

It belongs to the DPH7 family. Interacts with INCA1.

The enzyme catalyses diphthine methyl ester-[translation elongation factor 2] + H2O = diphthine-[translation elongation factor 2] + methanol + H(+). It functions in the pathway protein modification; peptidyl-diphthamide biosynthesis. In terms of biological role, catalyzes the demethylation of diphthine methyl ester to form diphthine, an intermediate diphthamide biosynthesis, a post-translational modification of histidine which occurs in translation elongation factor 2 (EEF2) which can be ADP-ribosylated by diphtheria toxin and by Pseudomonas exotoxin A (Eta). The chain is Diphthine methyltransferase (DPH7) from Homo sapiens (Human).